Here is a 284-residue protein sequence, read N- to C-terminus: uncharacterized protein (284 aa).

It belongs to the methyltransferase superfamily.

Its subcellular location is the cytoplasm. It localises to the nucleus. Its function is as follows. Probable methyltransferase. This is an uncharacterized protein from Schizosaccharomyces pombe (strain 972 / ATCC 24843) (Fission yeast).